The sequence spans 76 residues: Putative snRNP Sm-like protein (76 aa).

The 73-residue stretch at 4–76 (RPLDVIHRSL…VLAISPVDIE (73 aa)) folds into the Sm domain.

This sequence belongs to the snRNP Sm proteins family.

The polypeptide is Putative snRNP Sm-like protein (Thermococcus gammatolerans (strain DSM 15229 / JCM 11827 / EJ3)).